Here is a 150-residue protein sequence, read N- to C-terminus: Large ribosomal subunit protein bL9 (150 aa).

Belongs to the bacterial ribosomal protein bL9 family.

In terms of biological role, binds to the 23S rRNA. This chain is Large ribosomal subunit protein bL9, found in Alkalilimnicola ehrlichii (strain ATCC BAA-1101 / DSM 17681 / MLHE-1).